A 240-amino-acid chain; its full sequence is Gas vesicle protein C (240 aa).

Residues 1 to 13 (MALKDKWQQDRIG) show a composition bias toward basic and acidic residues. A disordered region spans residues 1 to 20 (MALKDKWQQDRIGRQQGVQE). Repeats lie at residues 18 to 50 (VQER…RQGF), 51 to 83 (VTGV…LENF), 84 to 116 (IQQL…LSEF), 117 to 149 (REDL…LAIF), and 150 to 207 (RQTL…LQDY). The interval 18-207 (VQERQQQVQT…GVFRAELQDY (190 aa)) is 5 X 33 AA tandem repeats.

The protein belongs to the gas vesicle GvpC family.

The protein resides in the gas vesicle. In terms of biological role, confers stability, involved in shaping gas vesicles, hollow, gas filled proteinaceous nanostructures. During planktonic growth they allow positioning of the organism at a favorable depth for light or nutrient acquisition. The polypeptide is Gas vesicle protein C (Planktothrix agardhii (Oscillatoria agardhii)).